Reading from the N-terminus, the 2797-residue chain is MYHQLESHGVFPTLGDDAAKLVRTTHVQEIAFTPISEIQRFCEAQNISCDSFYLNVWSLVLRAFAETNSVCVGFGDFRPSGARLDQALFKILQTTLSPKSSILSILQGFKQDERAFSVNHREPAHNTGVVFISEASGPLDLASLGKLKYDLLMVVSFDSKSIPISLFLVYRPSTLSQSHAENLSSNITQAMQQVLARPNSFVNDVELFSTFNKSLVLCWNGLERKAASLLEVIQGHVRSRPDHPAICAWDGTISYSQLDMLTTQWASYLQSRGVQPGCLVPIMMEHSKWAIIGEIAILKAGAAFVPIDPAHPVSRLKGIVQRTKANIAVSSGHLIDKLSSLVDTVVEISDQTTSGLPEAVRHGAANPVPFDRTAYVLFTSGSTGQPKGCVVSYRALSDVVHQTTALNIDSESRVLQFASYTYGMSLIEVHCTLAAGATICIPSDYHRLNALSSAIQSTQVTWAILTASTTLTIAETARYLRTLVVAGEPMGIDHVRSLADKVELLQAFGLTEWGGICCVSQRIRSEGDVRLIGRSPTANLWLIDPTDGSKLAPVGAAAELFVEGPALADGYLEDPHQTAAVFIKRPPWIPAPTGVRLYRTGDLVRYTGDGNLLYIARKDSQVKIRGMRVELGEVEYQIRQAFPALGEAIAVATTTKESSGMPILAAFLHMENQLDLSGQSFSHMIDTIKTSLRKTLPDYMWPSIYIPLDSVPLTISRKIDRKDLQLRVQKSTRMELEENQVSSACIVAPLTDTERHVHRFVAELLHLDPLSFGMNQNFINLGGDSVSAMRLVNKCKYQGYRVTVGEILEVRTLSDIVSLVRTATTSSSVPSAGAEISRSDAPTESPATGSFEGSGYTTIPRLSQSGPIEQSFSQARMWFLEELHPGSSWYILPYATRLQGPLQLDHLEAALSALSERHETLRTTFESRDGTGLQIVAPFRPKPLEVIEVTSDSSIAALRTALQEQMKPFDLTKDTWRSAVLRLSPTDHVFSVVFHHIISDGWSVDVFMKTLETFYSAVIRGQPPLHITKPLQIQYRDFSIWQRQEQSRIHQKQIAYWIQQLHGSKPAEFLCDKPRPTKPSIAAGSMDVKIDGELYQALQGFCRSRQVTPFTTLLAAFRTTHYRLTGASDATIGIPSASRTRPELEELIGYFGNVQCIRTVIDSRGQSFQQLVQQVQSATTAASQNQDVPFDQVVSRLLKDRDMSRHPLVQVTFVLHPQANFGQLHLEGLRAEHLHLPQVTRLDLEFHLYPGDGCLQGDILYSADLFNPETIRTLRSVFYDVLSEGLCHPDIEIGSLLLTDAYPVLDQRGLIYTAHEAPFQGCSIIDMFHQQVAAHGDQMAIKDTHTQLTYCELDRRSDMLATWLKNSFLFVEETPVGVFGNRSCESIVTILGILKAGLAYVPLDADAPPQRTEMILSCLPSCQLVLLLSGLMAPPTLPSNIKFAYVSNSSDVKVEEVDAFLTHTPTPRATNLAYIVFTSGTTGTPKGVMVEHRGVVRLAKDPEIVAHTRDFKVASHVLNPAFDASGFEVYATLLNGGTLVCIDKNIVWDYAALGATLVKHGVQRAFFTTAVLKQCLLSAPYIMSDLEILYVGGDKLDPHDMAVARRFGKVRIFNVYGPTENSVVSTRYAIPDGEAAVNGMPIGRSIAGSGAYVMDPNLRLVPIGAMGELVVTGLGLARGYTNPEQNIGRFVTVSIGGQVVHAYRTGDMVRYRPSDAQLEFFGRMDQQVKIRGYRVELAEIDNALALNSLVSSAVTVLQTQEDQEQELVSFVTIQDTAANVENLEEHISNAHVNSWKDHAEGGDHYGKLGAVDPATLGRDFLGWVSMYDGEAIDTEVMTEWLEDTIAAIHLCDAASALEIGTGTGMILFNLIDSLKEYYGLEPSRQAVEFVQRAVRCVPKAASKVRIQQGTASALVGLKATGPIDLAVVNSVAQYFPSAKYMTRVIKQLIQLHDLNCIFFGDIRSYGLYEEFQASKVLHLYGHTLSAREFSQKMAEIVQLEKELLIDPAFFTALATEFPELIEHVEIMPKRMKTTNELSCYRYTAILHIRRPSQSLLVHEVEQSSWLDFEASGLDYRSLTQMLKTSNDVSVLAFSNIPFKKTIMERHVVNFLRHLPTGAGSAGWSMDVCQQALVCPAIDATELIDVAQLTGWQVEISWARQHSQFGGLDAIFHRLKPEDNGSRVFFQFPTDHGRRGLSCAFSNDPLALQRNQRIENELLENLRARLPSYMVPKRIRVLDRMPINNIGKVDRQALAKRVDIPPPAGVLTARSSPRNDMSFTDDIERAMWEEFAGVLGVEVGIADSFFDCGGHSLMAIKLVSRINKRLQSTVPVSDLFQYPSVSRLAGRVRGFRAPSNSTVSYQPFSLLPGSLSRLPYIDSPYGSEPHLPPSTEIIDMLPVTESQAWFLADWSLVSHSFRIEGALDVDGLRAACQAVVRHHATLRTVFTKLLGRLVQVVCGSVDAPFAHVYTDGDLESECRSLCAADGGAPSGLTTGFTLLSRSTIEHIFILRFSHAQYDGISLSSILSDLAAAYAGTAPLPTTAPFSGYVHVAALSRSVALDFWKKYLEGSVLTTLRPSNTAINARVVDLTREAVGKLHQLADITFPTIVNAAIAITLASLVKRNDVTFACVMSSRGVLSQGADSVQGPCVNRTLIRVQLSPDSTALGFCRGLRKNQARVSAENHLELGDVLENCTSWSSSDRLAPWITHLPADKATSTLALPGACITYRSTDVRINPRNQILVRSVITDQQQACIQVQVSSTVMDGSYAFSLASKILNTAQALSMSAERTLSSIDVHE.

The interval Ser-239–Arg-625 is adenylation 1. The Carrier 1 domain occupies Thr-751–Thr-824. Position 785 is an O-(pantetheine 4'-phosphoryl)serine (Ser-785). A disordered region spans residues Pro-830–Tyr-856. Positions Gln-870–Thr-1299 are condensation 1. The tract at residues Phe-1328 to Arg-1731 is adenylation 2. The interval Leu-1857–Asp-1953 is methyltransferase. The Carrier 2 domain maps to Ser-2277–Arg-2351. Ser-2311 is subject to O-(pantetheine 4'-phosphoryl)serine. The tract at residues Tyr-2516–Leu-2658 is condensation 2.

The protein belongs to the NRP synthetase family.

It catalyses the reaction O-methyl-L-tyrosine + anthranilate + S-adenosyl-L-methionine + 2 ATP = (-)-4'-methoxycyclopeptine + 2 AMP + S-adenosyl-L-homocysteine + 2 diphosphate + 2 H(+). The catalysed reaction is anthranilate + L-phenylalanine + S-adenosyl-L-methionine + 2 ATP = cyclopeptine + 2 AMP + S-adenosyl-L-homocysteine + 2 diphosphate + 2 H(+). It participates in secondary metabolite biosynthesis. The protein operates within alkaloid biosynthesis. It functions in the pathway mycotoxin biosynthesis. Its function is as follows. Nonribosomal peptide synthetase; part of the gene cluster that mediates the biosynthesis of penigequinolones, potent insecticidal alkaloids that contain a highly modified 10-carbon prenyl group. The first stage is catalyzed by the nonribosomal peptide synthetase penN that condenses anthranilic acid and O-methyl-L-tyrosine to produce 4'-methoxycyclopeptin. 4'-methoxycyclopeptin is then converted to 4'-methoxydehydrocyclopeptin by the ketoglutarate-dependent dioxygenase penM through dehydrogenation to form a double bond between C-alpha and C-beta of the O-methyltyrosine side chain. PenM also converts its first product methoxydehydrocyclopeptin to 4'-methoxycyclopenin. The following conversion of 4'methoxycyclopenin into 4'-methoxyviridicatin is catalyzed by the cyclopenase penL. 4'-methoxyviridicatin is the precursor of quinolone natural products, and is further converted to quinolinone B. The prenyltransferase penI then catalyzes the canonical Friedel-Crafts alkylation of quinolinone B with dimethylallyl cation to yield dimethylallyl quinolone, which is subjected to FAD-dependent dehydrogenation by the FAD-linked oxidoreductase penH to yield conjugated aryl diene. The delta(3') double bond then serves as the site of the second alkylation with DMAPP catalyzed by the prenyltransferase penG to yield a carbenium ion intermediate, which can be attacked by H(2)O to yield a styrenyl quinolone containing a C3'-hydroxyprenyl chain, or undergo cyclization to yield yaequinolones J1 and J2. The conversion of the styrenyl quinolone into the tetrahydrofuran-containing yaequinolone C is performed by the FAD-dependent monooxygenase penE and involves epoxidation of the terminal C7'-C8' olefin, followed by epoxide ring opening initiated by the C3' hydroxyl group. The predicted cysteine hydrolase penJ acts as an epoxide hydrolase that enhances the rate of the 5-exo-tet cyclization step, increasing the yield of yaequinolone C. PenF catalyzes the cationic rearrangement of the epoxide formed by penE (before ring opening to produce yaequinolone C) into yaequinolone D. Finally, the short-chain dehydrogenase/reductase (SDR)-like reductase penD, catalyzes both the dehydration of yaequinolone D and the reduction of the resulting oxonium to yield penigequinolone. The polypeptide is Nonribosomal peptide synthetase penN (Penicillium thymicola).